Here is a 124-residue protein sequence, read N- to C-terminus: Insulin growth factor-like family member 4 (124 aa).

The first 19 residues, Met-1–Ser-19, serve as a signal peptide directing secretion. Asn-57 and Asn-84 each carry an N-linked (GlcNAc...) asparagine glycan.

Belongs to the IGFL family. As to expression, detected in the cerebellum.

It is found in the secreted. The protein is Insulin growth factor-like family member 4 (IGFL4) of Homo sapiens (Human).